Consider the following 180-residue polypeptide: NADH-quinone oxidoreductase subunit I (180 aa).

4Fe-4S ferredoxin-type domains follow at residues 50–80 (LTRD…LQKA) and 90–119 (EFFR…LTPD). 8 residues coordinate [4Fe-4S] cluster: cysteine 60, cysteine 63, cysteine 66, cysteine 70, cysteine 99, cysteine 102, cysteine 105, and cysteine 109.

It belongs to the complex I 23 kDa subunit family. In terms of assembly, NDH-1 is composed of 13 different subunits. Subunits NuoA, H, J, K, L, M, N constitute the membrane sector of the complex. Requires [4Fe-4S] cluster as cofactor.

It is found in the cell inner membrane. It catalyses the reaction a quinone + NADH + 5 H(+)(in) = a quinol + NAD(+) + 4 H(+)(out). In terms of biological role, NDH-1 shuttles electrons from NADH, via FMN and iron-sulfur (Fe-S) centers, to quinones in the respiratory chain. The immediate electron acceptor for the enzyme in this species is believed to be ubiquinone. Couples the redox reaction to proton translocation (for every two electrons transferred, four hydrogen ions are translocated across the cytoplasmic membrane), and thus conserves the redox energy in a proton gradient. The sequence is that of NADH-quinone oxidoreductase subunit I from Yersinia enterocolitica serotype O:8 / biotype 1B (strain NCTC 13174 / 8081).